The sequence spans 175 residues: Protein MAL2 (175 aa).

The Cytoplasmic portion of the chain corresponds to 1–33; that stretch reads MSAGGAVPPPPNPAVSFPAPRVTLPAGPDILRT. In terms of domain architecture, MARVEL spans 30 to 174; sequence ILRTYSGAFV…SLGLALRRWR (145 aa). The helical transmembrane segment at 34-54 threads the bilayer; sequence YSGAFVCLEIVLGGLVWILVA. The Lumenal portion of the chain corresponds to 55 to 65; it reads SSNVPLPLLQG. A helical transmembrane segment spans residues 66–86; it reads WVMFVSVTAFFFSLLFLGLFL. At 87–101 the chain is on the cytoplasmic side; the sequence is SGMVTQIDANWNFLD. The chain crosses the membrane as a helical span at residues 102–122; the sequence is FVYHFIVFVFYFGAFLLEAAA. At 123–148 the chain is on the lumenal side; that stretch reads TSLHDLQCNTTMTVKPLLNDNQYNIN. The N-linked (GlcNAc...) asparagine glycan is linked to Asn131. A helical membrane pass occupies residues 149–169; that stretch reads VAATVFAFMTTACYGCSLGLA. Residues 170 to 175 lie on the Cytoplasmic side of the membrane; sequence LRRWRP.

Belongs to the MAL family. As to quaternary structure, interacts with TPD52L2.

Its subcellular location is the cell membrane. The protein resides in the apical cell membrane. Its function is as follows. Member of the machinery of polarized transport. Required for the indirect transcytotic route at the step of the egress of the transcytosing cargo from perinuclear endosomes in order for it to travel to the apical surface via a raft-dependent pathway. In Mus musculus (Mouse), this protein is Protein MAL2 (Mal2).